The chain runs to 125 residues: Cu-Zn superoxide dismutase-like protein OPG175 (125 aa).

A disulfide bridge connects residues Cys52 and Cys102.

It belongs to the Cu-Zn superoxide dismutase family.

The protein localises to the virion. Its subcellular location is the host cytoplasm. In terms of biological role, superoxide dismutase-like protein with no enzymatic activity. The sequence is that of Cu-Zn superoxide dismutase-like protein OPG175 (OPG175) from Vaccinia virus (strain Western Reserve) (VACV).